A 325-amino-acid chain; its full sequence is DDB1- and CUL4-associated factor 7 homolog (325 aa).

WD repeat units lie at residues 62–104 (EHPY…RSIK), 115–155 (EFCA…AKTQ), 158–197 (AHDK…HSTI), and 247–287 (FHKS…KPIE).

Belongs to the WD repeat DCAF7 family.

The chain is DDB1- and CUL4-associated factor 7 homolog (wdr68) from Dictyostelium discoideum (Social amoeba).